Consider the following 185-residue polypeptide: Ribosome-recycling factor (185 aa).

Belongs to the RRF family.

The protein resides in the cytoplasm. Its function is as follows. Responsible for the release of ribosomes from messenger RNA at the termination of protein biosynthesis. May increase the efficiency of translation by recycling ribosomes from one round of translation to another. This Aeromonas hydrophila subsp. hydrophila (strain ATCC 7966 / DSM 30187 / BCRC 13018 / CCUG 14551 / JCM 1027 / KCTC 2358 / NCIMB 9240 / NCTC 8049) protein is Ribosome-recycling factor.